We begin with the raw amino-acid sequence, 480 residues long: Glutamyl-tRNA(Gln) amidotransferase subunit A (480 aa).

Active-site charge relay system residues include Lys79 and Ser154. The segment at 133–156 (NENSAYGPVRNPRDKSRVPGGSSG) is disordered. The active-site Acyl-ester intermediate is the Ser178.

This sequence belongs to the amidase family. GatA subfamily. Heterotrimer of A, B and C subunits.

The enzyme catalyses L-glutamyl-tRNA(Gln) + L-glutamine + ATP + H2O = L-glutaminyl-tRNA(Gln) + L-glutamate + ADP + phosphate + H(+). Its function is as follows. Allows the formation of correctly charged Gln-tRNA(Gln) through the transamidation of misacylated Glu-tRNA(Gln) in organisms which lack glutaminyl-tRNA synthetase. The reaction takes place in the presence of glutamine and ATP through an activated gamma-phospho-Glu-tRNA(Gln). In Koribacter versatilis (strain Ellin345), this protein is Glutamyl-tRNA(Gln) amidotransferase subunit A.